A 452-amino-acid chain; its full sequence is Probable ECA polymerase (452 aa).

The next 11 helical transmembrane spans lie at 6–26 (FSGL…LTWF), 37–57 (VFFS…TSVL), 63–83 (VGVA…CFYG), 118–138 (VILM…NGFL), 155–175 (GVAL…VYFL), 181–201 (AWLF…MIVG), 207–227 (IIIA…ISLW), 228–248 (MLAA…LKRY), 341–361 (LVVM…GLII), 378–398 (YKAA…IVLV), and 410–430 (VFFL…FWLF).

Belongs to the WzyE family. As to quaternary structure, probably part of a complex composed of WzxE, WzyE and WzzE.

It is found in the cell inner membrane. It participates in bacterial outer membrane biogenesis; enterobacterial common antigen biosynthesis. In terms of biological role, probably involved in the polymerization of enterobacterial common antigen (ECA) trisaccharide repeat units. In Salmonella gallinarum (strain 287/91 / NCTC 13346), this protein is Probable ECA polymerase.